We begin with the raw amino-acid sequence, 433 residues long: Energy-coupling factor transporter ATP-binding protein EcfA2 (433 aa).

Positions 25-389 (VRVKNLYAVY…QHIINSTSIQ (365 aa)) constitute an ABC transporter domain. 62–69 (GNSGSGKS) serves as a coordination point for ATP.

Belongs to the ABC transporter superfamily. Energy-coupling factor EcfA family. As to quaternary structure, forms a stable energy-coupling factor (ECF) transporter complex composed of 2 membrane-embedded substrate-binding proteins (S component), 2 ATP-binding proteins (A component) and 2 transmembrane proteins (T component).

The protein localises to the cell membrane. Its function is as follows. ATP-binding (A) component of a common energy-coupling factor (ECF) ABC-transporter complex. Unlike classic ABC transporters this ECF transporter provides the energy necessary to transport a number of different substrates. The sequence is that of Energy-coupling factor transporter ATP-binding protein EcfA2 from Ureaplasma parvum serovar 3 (strain ATCC 700970).